Consider the following 276-residue polypeptide: Mitochondrial outer membrane protein porin 6 (276 aa).

It belongs to the eukaryotic mitochondrial porin (TC 1.B.8.1) family.

The protein resides in the mitochondrion outer membrane. In terms of biological role, forms a channel through the mitochondrial outer membrane that allows diffusion of small hydrophilic molecules. The channel adopts an open conformation at low or zero membrane potential and a closed conformation at potentials above 30-40 mV. The open state has a weak anion selectivity whereas the closed state is cation-selective. The sequence is that of Mitochondrial outer membrane protein porin 6 (VDAC6) from Oryza sativa subsp. japonica (Rice).